The following is a 320-amino-acid chain: Endochitinase (320 aa).

The N-terminal stretch at 1 to 23 (MKRTLKVSFFILCLLPLFLGSKA) is a signal peptide. One can recognise a Chitin-binding type-1 domain in the interval 24–64 (EQCGSQAGGAVCPNGLCCSKFGFCGSTDPYCGDGCQSQCKS). Cystine bridges form between Cys-26-Cys-41, Cys-35-Cys-47, Cys-40-Cys-54, Cys-58-Cys-62, Cys-101-Cys-163, Cys-175-Cys-182, and Cys-281-Cys-313. The active-site Proton donor is Glu-145.

This sequence belongs to the glycosyl hydrolase 19 family. Chitinase class I subfamily.

It catalyses the reaction Random endo-hydrolysis of N-acetyl-beta-D-glucosaminide (1-&gt;4)-beta-linkages in chitin and chitodextrins.. Functionally, defense against chitin-containing fungal pathogens. This chain is Endochitinase, found in Pisum sativum (Garden pea).